Reading from the N-terminus, the 216-residue chain is N-glycosylase/DNA lyase (216 aa).

8-oxoguanine contacts are provided by glutamine 27, serine 48, and tryptophan 59. The interval 106-170 (EHYYENMVAL…LDYRLKKINP (65 aa)) is helix-hairpin-helix. Catalysis depends on lysine 130, which acts as the Schiff-base intermediate with DNA. Residues phenylalanine 134 and proline 160 each coordinate 8-oxoguanine. Residue aspartate 162 is part of the active site. 8-oxoguanine-binding residues include aspartate 190 and tryptophan 194.

Belongs to the archaeal N-glycosylase/DNA lyase (AGOG) family.

It catalyses the reaction 2'-deoxyribonucleotide-(2'-deoxyribose 5'-phosphate)-2'-deoxyribonucleotide-DNA = a 3'-end 2'-deoxyribonucleotide-(2,3-dehydro-2,3-deoxyribose 5'-phosphate)-DNA + a 5'-end 5'-phospho-2'-deoxyribonucleoside-DNA + H(+). Its function is as follows. DNA repair enzyme that is part of the base excision repair (BER) pathway; protects from oxidative damage by removing the major product of DNA oxidation, 8-oxoguanine (GO), from single- and double-stranded DNA substrates. The chain is N-glycosylase/DNA lyase from Nanoarchaeum equitans (strain Kin4-M).